The primary structure comprises 877 residues: Valine--tRNA ligase (877 aa).

The 'HIGH' region signature appears at 46–56 (PYPTGSIHMGH). The 'KMSKS' region motif lies at 529–533 (KMSKS). Position 532 (Lys532) interacts with ATP.

It belongs to the class-I aminoacyl-tRNA synthetase family. ValS type 2 subfamily.

The protein resides in the cytoplasm. The catalysed reaction is tRNA(Val) + L-valine + ATP = L-valyl-tRNA(Val) + AMP + diphosphate. Functionally, catalyzes the attachment of valine to tRNA(Val). As ValRS can inadvertently accommodate and process structurally similar amino acids such as threonine, to avoid such errors, it has a 'posttransfer' editing activity that hydrolyzes mischarged Thr-tRNA(Val) in a tRNA-dependent manner. In Methanothermobacter thermautotrophicus (strain ATCC 29096 / DSM 1053 / JCM 10044 / NBRC 100330 / Delta H) (Methanobacterium thermoautotrophicum), this protein is Valine--tRNA ligase.